Consider the following 104-residue polypeptide: Cytochrome c-552 (104 aa).

An N-terminal signal peptide occupies residues 1–23; sequence MHLHLRGICLVLAVASSSSSALA. The heme c site is built by C37, C40, H41, and M82.

Belongs to the cytochrome c family. As to quaternary structure, monoheme monomer. Has the tendency to dimerize. In terms of processing, binds 1 heme c group covalently per subunit.

Its subcellular location is the periplasm. This is Cytochrome c-552 (cycB) from Bradyrhizobium diazoefficiens (strain JCM 10833 / BCRC 13528 / IAM 13628 / NBRC 14792 / USDA 110).